The chain runs to 161 residues: Endoribonuclease YbeY (161 aa).

His121, His125, and His131 together coordinate Zn(2+).

It belongs to the endoribonuclease YbeY family. Zn(2+) serves as cofactor.

Its subcellular location is the cytoplasm. Its function is as follows. Single strand-specific metallo-endoribonuclease involved in late-stage 70S ribosome quality control and in maturation of the 3' terminus of the 16S rRNA. This is Endoribonuclease YbeY from Stenotrophomonas maltophilia (strain R551-3).